The following is a 53-amino-acid chain: UPF0391 membrane protein ECA0470 (53 aa).

Helical transmembrane passes span Trp-4–Ala-24 and Ala-30–Phe-47.

This sequence belongs to the UPF0391 family.

It localises to the cell membrane. In Pectobacterium atrosepticum (strain SCRI 1043 / ATCC BAA-672) (Erwinia carotovora subsp. atroseptica), this protein is UPF0391 membrane protein ECA0470.